Here is a 431-residue protein sequence, read N- to C-terminus: Adenylosuccinate synthetase (431 aa).

GTP is bound by residues 12–18 (GDEGKGK) and 40–42 (GHT). D13 serves as the catalytic Proton acceptor. Mg(2+) is bound by residues D13 and G40. IMP is bound by residues 13-16 (DEGK), 38-41 (NAGH), T128, R142, Q223, T238, and R301. Residue H41 is the Proton donor of the active site. 297 to 303 (TVTGRPR) contacts substrate. GTP-binding positions include R303, 329–331 (SID), and 411–413 (SVG).

It belongs to the adenylosuccinate synthetase family. In terms of assembly, homodimer. It depends on Mg(2+) as a cofactor.

The protein localises to the cytoplasm. The catalysed reaction is IMP + L-aspartate + GTP = N(6)-(1,2-dicarboxyethyl)-AMP + GDP + phosphate + 2 H(+). The protein operates within purine metabolism; AMP biosynthesis via de novo pathway; AMP from IMP: step 1/2. Its function is as follows. Plays an important role in the de novo pathway of purine nucleotide biosynthesis. Catalyzes the first committed step in the biosynthesis of AMP from IMP. The sequence is that of Adenylosuccinate synthetase from Lacticaseibacillus casei (strain BL23) (Lactobacillus casei).